A 314-amino-acid polypeptide reads, in one-letter code: MFSINPLENLKLYISSRPPLVVFMISVSAMAIAFLTLGYFFKIKEIKSPEMAEDWNTFLLRFNDLDLCVSENETLKHLSNDTTTPESTMTVGQARSSTQPPQSLEESGPINISVAITLTLDPLKPFGGYSRNVTHLYSTILGHQIGLSGREAHEEINITFTLPAAWNADDCALHGHCEQAVFTACMTLTAAPGVFPVTVQPPHCIPDTYSNATLWYKIFTTARDANTKYAQDYNPFWCYKGAIGKVYHALNPKLTVVVPDDDRSLINLHLMHTSYFLFVMVITMFCYAVIKGRPSKLRQSNPEFCPEKVALADA.

The chain crosses the membrane as a helical span at residues 21-41 (VVFMISVSAMAIAFLTLGYFF). Residues 78–106 (LSNDTTTPESTMTVGQARSSTQPPQSLEE) are disordered. A compositionally biased stretch (polar residues) spans 80-105 (NDTTTPESTMTVGQARSSTQPPQSLE). Transmembrane regions (helical) follow at residues 179 to 199 (QAVF…PVTV), 236 to 258 (FWCY…TVVV), and 270 to 290 (LMHT…YAVI).

The protein belongs to the TMEM248 family.

Its subcellular location is the membrane. The sequence is that of Transmembrane protein 248 (Tmem248) from Mus musculus (Mouse).